Reading from the N-terminus, the 82-residue chain is Small ribosomal subunit protein uS17 (82 aa).

Belongs to the universal ribosomal protein uS17 family. Part of the 30S ribosomal subunit.

In terms of biological role, one of the primary rRNA binding proteins, it binds specifically to the 5'-end of 16S ribosomal RNA. In Aeromonas hydrophila subsp. hydrophila (strain ATCC 7966 / DSM 30187 / BCRC 13018 / CCUG 14551 / JCM 1027 / KCTC 2358 / NCIMB 9240 / NCTC 8049), this protein is Small ribosomal subunit protein uS17.